Reading from the N-terminus, the 233-residue chain is Ion-translocating oxidoreductase complex subunit E (233 aa).

Helical transmembrane passes span 18–38, 39–59, 69–89, 92–112, 128–148, and 182–202; these read ALVQ…ATNA, LGLG…VSAL, IPIY…LINA, FGLY…CIVI, ALDG…LGAL, and PFLL…LLAG.

The protein belongs to the NqrDE/RnfAE family. The complex is composed of six subunits: RnfA, RnfB, RnfC, RnfD, RnfE and RnfG.

The protein resides in the cell inner membrane. Functionally, part of a membrane-bound complex that couples electron transfer with translocation of ions across the membrane. In Yersinia pseudotuberculosis serotype O:3 (strain YPIII), this protein is Ion-translocating oxidoreductase complex subunit E.